A 344-amino-acid polypeptide reads, in one-letter code: Ribosomal RNA large subunit methyltransferase Cfr (344 aa).

Residue Glu-90 is the Proton acceptor of the active site. The region spanning 97-330 is the Radical SAM core domain; sequence KQGWESFCIS…ATVRTQFGSE (234 aa). A disulfide bridge links Cys-104 with Cys-335. Cys-111, Cys-115, and Cys-118 together coordinate [4Fe-4S] cluster. S-adenosyl-L-methionine is bound by residues 157-158, Ser-188, 211-213, and Asn-292; these read GE and SLH. Residue Cys-335 is the S-methylcysteine intermediate of the active site.

The protein belongs to the radical SAM superfamily. RlmN family. Cfr subfamily. Requires [4Fe-4S] cluster as cofactor.

It localises to the cytoplasm. It catalyses the reaction adenosine(2503) in 23S rRNA + 2 reduced [2Fe-2S]-[ferredoxin] + 2 S-adenosyl-L-methionine = 8-methyladenosine(2503) in 23S rRNA + 5'-deoxyadenosine + L-methionine + 2 oxidized [2Fe-2S]-[ferredoxin] + S-adenosyl-L-homocysteine. In terms of biological role, specifically methylates position 8 of adenine 2503 in 23S rRNA. Confers resistance to some classes of antibiotics. In Clostridium botulinum (strain Loch Maree / Type A3), this protein is Ribosomal RNA large subunit methyltransferase Cfr.